Reading from the N-terminus, the 85-residue chain is Small ribosomal subunit protein uS17 (85 aa).

This sequence belongs to the universal ribosomal protein uS17 family. In terms of assembly, part of the 30S ribosomal subunit.

Functionally, one of the primary rRNA binding proteins, it binds specifically to the 5'-end of 16S ribosomal RNA. This chain is Small ribosomal subunit protein uS17, found in Desulfosudis oleivorans (strain DSM 6200 / JCM 39069 / Hxd3) (Desulfococcus oleovorans).